We begin with the raw amino-acid sequence, 369 residues long: Chaperone protein DnaJ (369 aa).

A J domain is found at 5 to 69; it reads DYYDVLGISK…NKKAQYDRFG (65 aa). The segment at 131–213 adopts a CR-type zinc-finger fold; it reads GTTKNVSVDI…CSGAGRVKAK (83 aa). Zn(2+) is bound by residues Cys144, Cys147, Cys161, Cys164, Cys187, Cys190, Cys201, and Cys204. CXXCXGXG motif repeat units follow at residues 144–151, 161–168, 187–194, and 201–208; these read CGHCHGSG, CSKCHGQG, CPQCQGEG, and CHVCSGAG.

The protein belongs to the DnaJ family. Homodimer. Zn(2+) is required as a cofactor.

The protein localises to the cytoplasm. Its function is as follows. Participates actively in the response to hyperosmotic and heat shock by preventing the aggregation of stress-denatured proteins and by disaggregating proteins, also in an autonomous, DnaK-independent fashion. Unfolded proteins bind initially to DnaJ; upon interaction with the DnaJ-bound protein, DnaK hydrolyzes its bound ATP, resulting in the formation of a stable complex. GrpE releases ADP from DnaK; ATP binding to DnaK triggers the release of the substrate protein, thus completing the reaction cycle. Several rounds of ATP-dependent interactions between DnaJ, DnaK and GrpE are required for fully efficient folding. Also involved, together with DnaK and GrpE, in the DNA replication of plasmids through activation of initiation proteins. The chain is Chaperone protein DnaJ from Acholeplasma laidlawii.